A 193-amino-acid polypeptide reads, in one-letter code: Rho-related GTP-binding protein RhoA-D (193 aa).

GTP-binding positions include 12–19, 30–37, 59–63, 117–120, and 160–162; these read GDGACGKT, FPEVYVPT, DTAGQ, NKKD, and SAK. The (Microbial infection) O-linked (GlcNAc) tyrosine; by Yersinia Afp18 glycan is linked to tyrosine 34. At cysteine 190 the chain carries Cysteine methyl ester. The S-geranylgeranyl cysteine moiety is linked to residue cysteine 190. The propeptide at 191–193 is removed in mature form; that stretch reads LLL.

It belongs to the small GTPase superfamily. Rho family. In terms of processing, (Microbial infection) Glycosylated at Tyr-34 by Yersinia ruckeri toxin Afp18. Mono-O-GlcNAcylation by Afp18 inhibits RhoA activation by guanine nucleotide exchange factors and blocks RhoA signaling.

The protein resides in the cell membrane. Regulates a signal transduction pathway linking plasma membrane receptors to the assembly of focal adhesions and actin stress fibers. The sequence is that of Rho-related GTP-binding protein RhoA-D from Danio rerio (Zebrafish).